Here is a 354-residue protein sequence, read N- to C-terminus: Protein RecA (354 aa).

Residue 67–74 (GPESSGKT) participates in ATP binding.

This sequence belongs to the RecA family.

Its subcellular location is the cytoplasm. Its function is as follows. Can catalyze the hydrolysis of ATP in the presence of single-stranded DNA, the ATP-dependent uptake of single-stranded DNA by duplex DNA, and the ATP-dependent hybridization of homologous single-stranded DNAs. It interacts with LexA causing its activation and leading to its autocatalytic cleavage. This is Protein RecA from Hamiltonella defensa subsp. Acyrthosiphon pisum (strain 5AT).